Here is a 239-residue protein sequence, read N- to C-terminus: 2,3,4,5-tetrahydropyridine-2,6-dicarboxylate N-acetyltransferase (239 aa).

The protein belongs to the transferase hexapeptide repeat family. DapH subfamily.

It carries out the reaction (S)-2,3,4,5-tetrahydrodipicolinate + acetyl-CoA + H2O = L-2-acetamido-6-oxoheptanedioate + CoA. It participates in amino-acid biosynthesis; L-lysine biosynthesis via DAP pathway; LL-2,6-diaminopimelate from (S)-tetrahydrodipicolinate (acetylase route): step 1/3. In terms of biological role, catalyzes the transfer of an acetyl group from acetyl-CoA to tetrahydrodipicolinate. The sequence is that of 2,3,4,5-tetrahydropyridine-2,6-dicarboxylate N-acetyltransferase from Staphylococcus saprophyticus subsp. saprophyticus (strain ATCC 15305 / DSM 20229 / NCIMB 8711 / NCTC 7292 / S-41).